Reading from the N-terminus, the 214-residue chain is Pyridoxine/pyridoxamine 5'-phosphate oxidase (214 aa).

Substrate is bound by residues arginine 8 to tyrosine 11 and arginine 66. FMN contacts are provided by residues arginine 61–arginine 66, phenylalanine 76–threonine 77, lysine 83, and glutamine 105. Tyrosine 123, arginine 127, and serine 131 together coordinate substrate. The tract at residues serine 126–serine 146 is disordered. FMN-binding positions include glutamine 141–serine 142 and tryptophan 187. Arginine 193 to histidine 195 contacts substrate. Residue arginine 197 participates in FMN binding.

The protein belongs to the pyridoxamine 5'-phosphate oxidase family. Homodimer. FMN is required as a cofactor.

The enzyme catalyses pyridoxamine 5'-phosphate + O2 + H2O = pyridoxal 5'-phosphate + H2O2 + NH4(+). The catalysed reaction is pyridoxine 5'-phosphate + O2 = pyridoxal 5'-phosphate + H2O2. It participates in cofactor metabolism; pyridoxal 5'-phosphate salvage; pyridoxal 5'-phosphate from pyridoxamine 5'-phosphate: step 1/1. It functions in the pathway cofactor metabolism; pyridoxal 5'-phosphate salvage; pyridoxal 5'-phosphate from pyridoxine 5'-phosphate: step 1/1. Catalyzes the oxidation of either pyridoxine 5'-phosphate (PNP) or pyridoxamine 5'-phosphate (PMP) into pyridoxal 5'-phosphate (PLP). The chain is Pyridoxine/pyridoxamine 5'-phosphate oxidase from Deinococcus deserti (strain DSM 17065 / CIP 109153 / LMG 22923 / VCD115).